Consider the following 103-residue polypeptide: Cyclotide vibi-K (103 aa).

A signal peptide spans 1-9 (AAFALPAFA). The propeptide occupies 10-69 (SFEKDVITPSVLEAVLNRKAPLSNIMMENDAILNVIANVKTVISNPVLEEALLKTNHGVN). Positions 70–99 (GIPCGESCVWIPCLTSAVGCPCKSKVCYRN) form a cross-link, cyclopeptide (Gly-Asn). 3 disulfides stabilise this stretch: Cys-73–Cys-89, Cys-77–Cys-91, and Cys-82–Cys-96. A propeptide spanning residues 100–103 (SLDN) is cleaved from the precursor.

This is a cyclic peptide.

Its function is as follows. Probably participates in a plant defense mechanism. The protein is Cyclotide vibi-K of Viola biflora (Yellow wood violet).